Reading from the N-terminus, the 132-residue chain is ATP synthase epsilon chain (132 aa).

This sequence belongs to the ATPase epsilon chain family. In terms of assembly, F-type ATPases have 2 components, CF(1) - the catalytic core - and CF(0) - the membrane proton channel. CF(1) has five subunits: alpha(3), beta(3), gamma(1), delta(1), epsilon(1). CF(0) has three main subunits: a, b and c.

Its subcellular location is the cell inner membrane. In terms of biological role, produces ATP from ADP in the presence of a proton gradient across the membrane. This is ATP synthase epsilon chain from Jannaschia sp. (strain CCS1).